The chain runs to 192 residues: Ion-translocating oxidoreductase complex subunit B (192 aa).

Residues 1-26 are hydrophobic; it reads MEMIVIAVVALTLLALLFGMLLGYAS. Positions 32 to 91 constitute a 4Fe-4S domain; it reads EEDPVVDQVDELLPQSQCGQCGYPGCRPYAEAVANNGEQINRCVPGGEPVMQKIATLLNV. Residues C49, C52, C57, C74, C117, C120, C123, C127, C147, C150, C153, and C157 each coordinate [4Fe-4S] cluster. 2 4Fe-4S ferredoxin-type domains span residues 108–137 and 138–167; these read MLAV…GATR and AMHT…LRPA.

The protein belongs to the 4Fe4S bacterial-type ferredoxin family. RnfB subfamily. In terms of assembly, the complex is composed of six subunits: RnfA, RnfB, RnfC, RnfD, RnfE and RnfG. The cofactor is [4Fe-4S] cluster.

The protein localises to the cell inner membrane. Part of a membrane-bound complex that couples electron transfer with translocation of ions across the membrane. The polypeptide is Ion-translocating oxidoreductase complex subunit B (Cronobacter sakazakii (strain ATCC BAA-894) (Enterobacter sakazakii)).